A 334-amino-acid chain; its full sequence is Porphobilinogen deaminase (334 aa).

Position 258 is an S-(dipyrrolylmethanemethyl)cysteine (Cys258).

It belongs to the HMBS family. Monomer. The cofactor is dipyrromethane.

It catalyses the reaction 4 porphobilinogen + H2O = hydroxymethylbilane + 4 NH4(+). Its pathway is porphyrin-containing compound metabolism; protoporphyrin-IX biosynthesis; coproporphyrinogen-III from 5-aminolevulinate: step 2/4. In terms of biological role, tetrapolymerization of the monopyrrole PBG into the hydroxymethylbilane pre-uroporphyrinogen in several discrete steps. This Ralstonia nicotianae (strain ATCC BAA-1114 / GMI1000) (Ralstonia solanacearum) protein is Porphobilinogen deaminase.